The sequence spans 95 residues: UPF0213 protein YPA_2977 (95 aa).

In terms of domain architecture, GIY-YIG spans 4 to 79 (SLWHLYLLRT…KQLSKQQKEK (76 aa)).

Belongs to the UPF0213 family.

This chain is UPF0213 protein YPA_2977, found in Yersinia pestis bv. Antiqua (strain Antiqua).